Consider the following 123-residue polypeptide: Alpha-lactalbumin B/C (123 aa).

Positions 1 to 123 (KQFTKCQLSQ…KLEQWLCEEL (123 aa)) constitute a C-type lysozyme domain. 4 cysteine pairs are disulfide-bonded: C6–C120, C28–C111, C61–C77, and C73–C91. K79, D82, D84, D87, and D88 together coordinate Ca(2+).

The protein belongs to the glycosyl hydrolase 22 family. In terms of assembly, lactose synthase (LS) is a heterodimer of a catalytic component, beta1,4-galactosyltransferase (beta4Gal-T1) and a regulatory component, alpha-lactalbumin (LA). Mammary gland specific. Secreted in milk.

It is found in the secreted. In terms of biological role, regulatory subunit of lactose synthase, changes the substrate specificity of galactosyltransferase in the mammary gland making glucose a good acceptor substrate for this enzyme. This enables LS to synthesize lactose, the major carbohydrate component of milk. In other tissues, galactosyltransferase transfers galactose onto the N-acetylglucosamine of the oligosaccharide chains in glycoproteins. The chain is Alpha-lactalbumin B/C from Equus caballus (Horse).